The chain runs to 476 residues: MVAAPTTATELKLGTDCVIADINLAAFGRKELDIAETEMPGLMALRAKYGNEKPLKGARIAGSLHMTIQTAVLIETLEELGADVRWASCNIFSTQDHAAAAIAANGTPVFAVKGETLEEYWAYTHRILEWSDGGAPNMILDDGGDATGLVILGTKAEQDITVLDNPSNEEETFLFASIKKKLAEDSSFYSRTKAAIQGVTEETTTGVARLYKMQKSGELPFPAINVNDSVTKSKFDNLYGCRESLVDSIKRATDVMVAGKQALVVGYGDVGKGSAQSLRGLGATVCIAEVDPICALQAAMEGYRVVRLDDVVDQMDIFVTATGNYQVIRNEHLVKMKDEAIVCNIGHFDNEIDVASLKDYKWDNIKPQVDHITLPSGNKIILLAEGRLVNLGCATGHPSFVMSNSFTNQVLAQIELFTKANEYGKEVYVLPKHLDEMVARLHLSKIGANLTELSKDQADYINVPVEGPYKPDHYRY.

Substrate is bound by residues Thr67, Asp142, and Glu202. Residue 203–205 coordinates NAD(+); that stretch reads TTT. Positions 232 and 236 each coordinate substrate. Residues Asn237, 266 to 271, Glu289, Asn324, 345 to 347, and Asn390 each bind NAD(+); these read GYGDVG and IGH.

The protein belongs to the adenosylhomocysteinase family. It depends on NAD(+) as a cofactor.

The protein localises to the cytoplasm. It carries out the reaction S-adenosyl-L-homocysteine + H2O = L-homocysteine + adenosine. It functions in the pathway amino-acid biosynthesis; L-homocysteine biosynthesis; L-homocysteine from S-adenosyl-L-homocysteine: step 1/1. In terms of biological role, may play a key role in the regulation of the intracellular concentration of adenosylhomocysteine. This chain is Adenosylhomocysteinase, found in Synechococcus sp. (strain CC9902).